We begin with the raw amino-acid sequence, 599 residues long: MERSKIRNFSIIAHIDHGKSTLADRLLETTGALSDREKTNQFLDKLDLERERGITIKAQAVRLKYRAEDGQDYILNLIDTPGHVDFSYEVSRSLAACEGGMLVVDASQGVEAQTLANVYLAIDQNLEVFPVLNKVDLPGAEPARIKEEIEEIIGLDASDAVEASAKEGIGIHEILESIVEKVPAPKGDADAPLKALIFDSWYDSYQGVIMLVRIFDGTLKKGDKIQLMASKRSYEVLKIGAFSPHPVEFSEMAAGEVGFVIAGIKVLQDAKVGDTVTHLHRPAENPLAGFQEVKPMVYSGLYPIDSGDYDALRDAMEKLRLNDSSFSFEPENSLALGFGFRCGFLGLLHMEIIQERLEREFNMELITTAPTVRYRVITTKGEELIVDSANKLPELQYIDQILEPFIVASIHVPNDYVGGVLALCEEKRGIQREIKYLTSNRVMVVYELPLNEIVLDFYDRLKTVSRGYASLDYEFLDYRPSDLVRLNILVNAETVDALSLIVHRDKSQMRGRELVAKMKEFIPRQQYEVAVQAAIGNKVVARANVKALRKDVTAKCYGGDITRKRKLLEKQKEGKKRMKQVGNVELPQEAFLAILKVKE.

The region spanning 4–186 is the tr-type G domain; that stretch reads SKIRNFSIIA…SIVEKVPAPK (183 aa). GTP is bound by residues 16-21 and 133-136; these read DHGKST and NKVD.

It belongs to the TRAFAC class translation factor GTPase superfamily. Classic translation factor GTPase family. LepA subfamily.

The protein localises to the cell inner membrane. The enzyme catalyses GTP + H2O = GDP + phosphate + H(+). Required for accurate and efficient protein synthesis under certain stress conditions. May act as a fidelity factor of the translation reaction, by catalyzing a one-codon backward translocation of tRNAs on improperly translocated ribosomes. Back-translocation proceeds from a post-translocation (POST) complex to a pre-translocation (PRE) complex, thus giving elongation factor G a second chance to translocate the tRNAs correctly. Binds to ribosomes in a GTP-dependent manner. The polypeptide is Elongation factor 4 (Syntrophotalea carbinolica (strain DSM 2380 / NBRC 103641 / GraBd1) (Pelobacter carbinolicus)).